A 114-amino-acid chain; its full sequence is Cytochrome c2 (114 aa).

Position 1 is a pyrrolidone carboxylic acid (Gln1). Residues Cys13, Cys16, His17, and Met93 each coordinate heme c.

This sequence belongs to the cytochrome c family. Post-translationally, binds 1 heme c group covalently per subunit.

In terms of biological role, cytochrome c2 is found mainly in purple, non-sulfur, photosynthetic bacteria where it functions as the electron donor to the oxidized bacteriochlorophyll in the photophosphorylation pathway. However, it may also have a role in the respiratory chain and is found in some non-photosynthetic bacteria. This Rhodopseudomonas palustris protein is Cytochrome c2 (cycA).